The chain runs to 560 residues: MVKLNDEEGAAMAPGHQPTNGYLLVPGGEPPGKVSAELQNGPKAVCLTLNGVSRDSLAAAAEALCRPQTPLAPEEETQTRLLPTGPGEETPGTEGSPAPQTALSARRFVVLLIFSLYSLVNAFQWIQYSVISNVFEGFYGVSSLHIDWLSMVYMLAYVPLIFPATWLLDTRGLRLTALLGSGLNCLGAWVKCASVQQHLFWVTMLGQCLCSVAQVFILGLPSRIASVWFGPKEVSTACATAVLGNQLGAAIGFLLPPVLVPNTQNNTDLLACNISTMFYGTSSVATFLCFLTIIAFKEKPQYPPSQAQAALQNSPPAKYSYKKSIRNLFRNVPFVLLLITYGIITGAFYSVSTLLNQMILTYYKGEEVSAGKIGLTLVVAGMVGSILCGFWLDYTKIYKQTTLIVYILSFLGMVIFTFTLDLGYGIVVFVTGGVLGFFMTGYLPLGFEFAVEITYPESEGTSSGLLNAAAQIFGILFTLAQGKLTTDYSPKAGNIFLCVWLFLGIILTALIKSDLRRHNINIGIANGDIKAVPVEDTVEDSPTDKESKTIVMSKQSESAI.

The interval 1 to 22 (MVKLNDEEGAAMAPGHQPTNGY) is disordered. Topologically, residues 1 to 99 (MVKLNDEEGA…TPGTEGSPAP (99 aa)) are cytoplasmic. A Phosphoserine modification is found at serine 56. The interval 68–99 (QTPLAPEEETQTRLLPTGPGEETPGTEGSPAP) is disordered. Positions 83-95 (PTGPGEETPGTEG) are enriched in low complexity. Residues 100-124 (QTALSARRFVVLLIFSLYSLVNAFQ) traverse the membrane as a helical segment. The Extracellular portion of the chain corresponds to 125-142 (WIQYSVISNVFEGFYGVS). Residues 143–170 (SLHIDWLSMVYMLAYVPLIFPATWLLDT) traverse the membrane as a helical segment. Topologically, residues 171-172 (RG) are cytoplasmic. A helical transmembrane segment spans residues 173 to 192 (LRLTALLGSGLNCLGAWVKC). Topologically, residues 193 to 199 (ASVQQHL) are extracellular. The helical transmembrane segment at 200–228 (FWVTMLGQCLCSVAQVFILGLPSRIASVW) threads the bilayer. Glutamine 214 is an ethanolamine binding site. The Cytoplasmic segment spans residues 229 to 233 (FGPKE). A helical membrane pass occupies residues 234 to 259 (VSTACATAVLGNQLGAAIGFLLPPVL). Residues 260 to 265 (VPNTQN) are Extracellular-facing. A glycan (N-linked (GlcNAc...) asparagine) is linked at asparagine 265. The chain crosses the membrane as a helical span at residues 266–295 (NTDLLACNISTMFYGTSSVATFLCFLTIIA). Residues 296 to 331 (FKEKPQYPPSQAQAALQNSPPAKYSYKKSIRNLFRN) are Cytoplasmic-facing. The helical transmembrane segment at 332–362 (VPFVLLLITYGIITGAFYSVSTLLNQMILTY) threads the bilayer. Over 363–366 (YKGE) the chain is Extracellular. The chain crosses the membrane as a helical span at residues 367–395 (EVSAGKIGLTLVVAGMVGSILCGFWLDYT). Over 396 to 397 (KI) the chain is Cytoplasmic. A helical membrane pass occupies residues 398–420 (YKQTTLIVYILSFLGMVIFTFTL). At 421–423 (DLG) the chain is on the extracellular side. Residues 424 to 453 (YGIVVFVTGGVLGFFMTGYLPLGFEFAVEI) form a helical membrane-spanning segment. At 454–461 (TYPESEGT) the chain is on the cytoplasmic side. Residues 462–487 (SSGLLNAAAQIFGILFTLAQGKLTTD) form a helical membrane-spanning segment. Position 471 (glutamine 471) interacts with ethanolamine. Position 471 (glutamine 471) interacts with choline. Residues 488-489 (YS) lie on the Extracellular side of the membrane. A helical transmembrane segment spans residues 490-512 (PKAGNIFLCVWLFLGIILTALIK). Residues 513–560 (SDLRRHNINIGIANGDIKAVPVEDTVEDSPTDKESKTIVMSKQSESAI) lie on the Cytoplasmic side of the membrane. Residues 537 to 560 (TVEDSPTDKESKTIVMSKQSESAI) are disordered. Serine 541 bears the Phosphoserine mark. Polar residues predominate over residues 550 to 560 (IVMSKQSESAI).

This sequence belongs to the major facilitator superfamily. Feline leukemia virus subgroup C receptor (TC 2.A.1.28.1) family.

It is found in the cell membrane. The catalysed reaction is choline(out) = choline(in). The enzyme catalyses ethanolamine(in) = ethanolamine(out). It carries out the reaction heme b(in) = heme b(out). Uniporter that mediates the transport of extracellular choline and ethanolamine into cells, thereby playing a key role in phospholipid biosynthesis. Choline and ethanolamine are the precursors of phosphatidylcholine and phosphatidylethanolamine, respectively, the two most abundant phospholipids. Transport is not coupled with proton transport and is exclusively driven by the choline (or ethanolamine) gradient across the plasma membrane. Also acts as a heme b transporter that mediates heme efflux from the cytoplasm to the extracellular compartment. In terms of biological role, (Microbial infection) Confers susceptibility to Feline leukemia virus subgroup C (FeLV-C) infection, which is associated with fatal erythroid aplasia, also known as aplastic anemia. The chain is Choline/ethanolamine transporter FLVCR1 (FLVCR1) from Felis catus (Cat).